A 957-amino-acid polypeptide reads, in one-letter code: Glycine dehydrogenase (decarboxylating) (957 aa).

Lys-708 bears the N6-(pyridoxal phosphate)lysine mark.

It belongs to the GcvP family. In terms of assembly, the glycine cleavage system is composed of four proteins: P, T, L and H. Pyridoxal 5'-phosphate is required as a cofactor.

The catalysed reaction is N(6)-[(R)-lipoyl]-L-lysyl-[glycine-cleavage complex H protein] + glycine + H(+) = N(6)-[(R)-S(8)-aminomethyldihydrolipoyl]-L-lysyl-[glycine-cleavage complex H protein] + CO2. In terms of biological role, the glycine cleavage system catalyzes the degradation of glycine. The P protein binds the alpha-amino group of glycine through its pyridoxal phosphate cofactor; CO(2) is released and the remaining methylamine moiety is then transferred to the lipoamide cofactor of the H protein. This is Glycine dehydrogenase (decarboxylating) from Shigella flexneri.